A 783-amino-acid polypeptide reads, in one-letter code: Cyclic di-GMP phosphodiesterase NbdA (783 aa).

One can recognise an MHYT domain in the interval 81–274; the sequence is YSPSLVALAF…FTGMAALVLS (194 aa). The next 7 membrane-spanning stretches (helical) occupy residues 84-104, 120-140, 150-170, 176-196, 215-235, 255-275, and 292-312; these read SLVA…LDMV, IGAF…MLAF, LPIT…TMYM, FGLL…AAMH, LFAL…AAVP, LLAG…VLSV, and LGWL…WAAW. Over 313-783 the chain is Cytoplasmic; the sequence is SEKQRERRLS…APPLRSLNQA (471 aa). One can recognise a GGDEF domain in the interval 375-507; it reads KGLAVMFLDL…GRNNAQFFSR (133 aa). Residues 516–770 enclose the EAL domain; the sequence is ELQMEEELRQ…ALEEFLRAYR (255 aa). 3',3'-c-di-GMP is bound by residues Gln-537, Glu-551, Arg-555, Asn-610, and Asn-615. Glu-551 is a Mg(2+) binding site. A Mg(2+)-binding site is contributed by Asn-610. Residues Glu-642, Asp-672, and Asp-673 each contribute to the Mg(2+) site. Asp-672 is a 3',3'-c-di-GMP binding site. Arg-696 serves as a coordination point for 3',3'-c-di-GMP. Glu-729 contributes to the Mg(2+) binding site. Glu-732 and Tyr-751 together coordinate 3',3'-c-di-GMP.

It depends on Mg(2+) as a cofactor.

Its subcellular location is the cell inner membrane. It catalyses the reaction 3',3'-c-di-GMP + H2O = 5'-phosphoguanylyl(3'-&gt;5')guanosine + H(+). Its activity is regulated as follows. PDE activity is stimulated by GTP. It could also be stimulated by NO. In terms of biological role, displays c-di-GMP-specific phosphodiesterase (PDE) activity. Seems to play a specific role in nitric oxide (NO)-induced biofilm dispersion. Enhanced NbdA synthesis in the presence of NO increases PDE activity, leading to reduced cellular c-di-GMP levels and biofilm dispersion. Does not show diguanylate cyclase (DGC) activity. In Pseudomonas aeruginosa (strain ATCC 15692 / DSM 22644 / CIP 104116 / JCM 14847 / LMG 12228 / 1C / PRS 101 / PAO1), this protein is Cyclic di-GMP phosphodiesterase NbdA.